A 464-amino-acid polypeptide reads, in one-letter code: Septin homolog spn5 (464 aa).

The interval 28 to 91 (QVDESSAKRS…VPNSNGKSIP (64 aa)) is disordered. 2 stretches are compositionally biased toward basic and acidic residues: residues 41 to 54 (ESRKSKDVTRKEQI) and 69 to 81 (TAKDKKTEFKQDE). In terms of domain architecture, Septin-type G spans 115–370 (NGIDINLIVV…DTFRTEKLVA (256 aa)). Residues 125–132 (GESSLGKT) form a G1 motif region. GTP-binding positions include 125–132 (GESSLGKT), T151, G177, 257–265 (KADTMTSDE), G304, and R319. The tract at residues 174-177 (DTPG) is G3 motif. The tract at residues 256-259 (GKAD) is G4 motif. A coiled-coil region spans residues 396-453 (LVEEALTKVMKEKYREKENNLELLETNLKTHHKDYKHALKKRITALEEEKNRLIKEIG).

It belongs to the TRAFAC class TrmE-Era-EngA-EngB-Septin-like GTPase superfamily. Septin GTPase family. As to quaternary structure, component of the sporulation-specific septin complex composed of at least spn2, spn5, spn6 and spn7.

The protein resides in the nucleus. It is found in the forespore membrane. Its function is as follows. Septin-like protein involved in the correct orientation of forespore membrane extension during sporulation. This chain is Septin homolog spn5 (spn5), found in Schizosaccharomyces pombe (strain 972 / ATCC 24843) (Fission yeast).